Consider the following 299-residue polypeptide: Nucleotide-binding protein Moth_0258 (299 aa).

Position 14-21 (14-21 (GLSGAGKT)) interacts with ATP. GTP is bound at residue 68–71 (DIRG).

It belongs to the RapZ-like family.

Functionally, displays ATPase and GTPase activities. This Moorella thermoacetica (strain ATCC 39073 / JCM 9320) protein is Nucleotide-binding protein Moth_0258.